We begin with the raw amino-acid sequence, 433 residues long: Bifunctional urease accessory protein UreEF (433 aa).

A urease accessory protein UreE region spans residues 1–200 (MKIANTFIKR…VMATAASTAS (200 aa)). The tract at residues 200–433 (SMTPSLDAGQ…ETQFSRLFRS (234 aa)) is urease accessory protein UreF.

This sequence in the N-terminal section; belongs to the UreE family. In the C-terminal section; belongs to the UreF family. As to quaternary structure, ureD, UreF and UreG form a complex that acts as a GTP-hydrolysis-dependent molecular chaperone, activating the urease apoprotein by helping to assemble the nickel containing metallocenter of UreC. The UreE protein probably delivers the nickel.

It localises to the cytoplasm. Involved in urease metallocenter assembly. Binds nickel. Probably functions as a nickel donor during metallocenter assembly. Functionally, required for maturation of urease via the functional incorporation of the urease nickel metallocenter. In Bordetella bronchiseptica (Alcaligenes bronchisepticus), this protein is Bifunctional urease accessory protein UreEF (ureEF).